Reading from the N-terminus, the 142-residue chain is Phenylalanine ammonia-lyase (142 aa).

Lys66, Glu94, and Asn97 together coordinate (E)-cinnamate.

This sequence belongs to the PAL/histidase family. As to quaternary structure, homotetramer. Contains an active site 4-methylidene-imidazol-5-one (MIO), which is formed autocatalytically by cyclization and dehydration of residues Ala-Ser-Gly.

It localises to the cytoplasm. The catalysed reaction is L-phenylalanine = (E)-cinnamate + NH4(+). Its pathway is phenylpropanoid metabolism; trans-cinnamate biosynthesis; trans-cinnamate from L-phenylalanine: step 1/1. Its function is as follows. Catalyzes the non-oxidative deamination of L-phenylalanine to form trans-cinnamic acid and a free ammonium ion. Facilitates the commitment step in phenylpropanoid pathways that produce secondary metabolites such as lignins, coumarins and flavonoids. The protein is Phenylalanine ammonia-lyase (palA) of Agaricus bisporus (White button mushroom).